We begin with the raw amino-acid sequence, 125 residues long: Holo-[acyl-carrier-protein] synthase (125 aa).

Aspartate 8 and glutamate 57 together coordinate Mg(2+).

This sequence belongs to the P-Pant transferase superfamily. AcpS family. Requires Mg(2+) as cofactor.

Its subcellular location is the cytoplasm. It catalyses the reaction apo-[ACP] + CoA = holo-[ACP] + adenosine 3',5'-bisphosphate + H(+). Functionally, transfers the 4'-phosphopantetheine moiety from coenzyme A to a Ser of acyl-carrier-protein. This chain is Holo-[acyl-carrier-protein] synthase, found in Thermus thermophilus (strain ATCC BAA-163 / DSM 7039 / HB27).